We begin with the raw amino-acid sequence, 242 residues long: uncharacterized protein (242 aa).

In terms of domain architecture, S4 RNA-binding spans 2-62; it reads EKAYKILSVQ…VEKPSVIFED (61 aa). The active site involves D93.

This sequence belongs to the pseudouridine synthase RluA family.

It carries out the reaction a uridine in RNA = a pseudouridine in RNA. This is an uncharacterized protein from Helicobacter pylori (strain ATCC 700392 / 26695) (Campylobacter pylori).